The following is a 202-amino-acid chain: Holliday junction branch migration complex subunit RuvA (202 aa).

Residues 1–65 (MIGYLEGRVV…EDALELFGFA (65 aa)) form a domain I region. The segment at 66 to 144 (SLDDRETFRT…GRAPAAGLAP (79 aa)) is domain II. The segment at 145–155 (SVPIPGGVAGD) is flexible linker. Positions 155–202 (DVVAGLTNLGYPEPEARQVAAEVLEAEPDLDVAAALRQALKRLASAKK) are domain III.

The protein belongs to the RuvA family. In terms of assembly, homotetramer. Forms an RuvA(8)-RuvB(12)-Holliday junction (HJ) complex. HJ DNA is sandwiched between 2 RuvA tetramers; dsDNA enters through RuvA and exits via RuvB. An RuvB hexamer assembles on each DNA strand where it exits the tetramer. Each RuvB hexamer is contacted by two RuvA subunits (via domain III) on 2 adjacent RuvB subunits; this complex drives branch migration. In the full resolvosome a probable DNA-RuvA(4)-RuvB(12)-RuvC(2) complex forms which resolves the HJ.

Its subcellular location is the cytoplasm. Functionally, the RuvA-RuvB-RuvC complex processes Holliday junction (HJ) DNA during genetic recombination and DNA repair, while the RuvA-RuvB complex plays an important role in the rescue of blocked DNA replication forks via replication fork reversal (RFR). RuvA specifically binds to HJ cruciform DNA, conferring on it an open structure. The RuvB hexamer acts as an ATP-dependent pump, pulling dsDNA into and through the RuvAB complex. HJ branch migration allows RuvC to scan DNA until it finds its consensus sequence, where it cleaves and resolves the cruciform DNA. This Solidesulfovibrio magneticus (strain ATCC 700980 / DSM 13731 / RS-1) (Desulfovibrio magneticus) protein is Holliday junction branch migration complex subunit RuvA.